Reading from the N-terminus, the 671-residue chain is MERLIFTAPLAGLISLTFAAFFAKSILKEDAGNKRMKEIAEAIKEGSTAYMKRQYRTIAVVSVIISLLILFLLDEGLKIAAGFLAGAISSAAAGYIGMSISVRANVRTASAASGGAGKALKIAFRGGAVTGLAVIGLALLGTSSLYILYGDADLVVGFGFGASLISLFARAGGGIFTKAADVGADLVGKIEAGIPEDDPRNPAVIADNVGDNVGDCAGMGADLFETYVVTSLAAMLLGSLIIGTYKNAVLYPLMLGSAAIFASIISVFFVKVEKEGKVMSALYRGVGGSTVLSLIAFYYITGFLMGDSRFFYVTVAGVVITVLMVIVTEYYTSKSCRPVKTIAVSSETGAATNIISGLSAGFESTLVPAVVIAAGILVSYFIVGGSADPGTGLYGIAIASVAMLSTAGMIVALDSYGPITDNAGGIAQMANLPAQVRKVTDELDSVGNTTKAVTKGYAIGSTALGALALFADYRNKVSLESQSISLDSPVVLSGILLGAVLPFLFSAVMMSAVGKAAFEVVNEVRRQFREIPGIMEGTAKPEYGRCVDIVTKAALHDMAMPGFLAVIIPLLTGFFLGPEALAGLLTGLIVVGFMLALMMDNGGGAWDNAKKLIEDGYYGGKGSEAHRAAVVGDTVGDPFKDTAGPALNSLIKVVNMVAILFSPLIIGGGFL.

5 helical membrane-spanning segments follow: residues 4 to 24 (LIFT…FFAK), 57 to 77 (TIAV…DEGL), 79 to 99 (IAAG…IGMS), 128 to 148 (AVTG…LYIL), and 156 to 176 (VGFG…GGIF). K178 is a binding site for substrate. Mg(2+) is bound by residues D181, D185, N208, and D211. 6 consecutive transmembrane segments (helical) span residues 223 to 243 (LFET…LIIG), 249 to 269 (VLYP…SVFF), 285 to 305 (GVGG…GFLM), 310 to 330 (FFYV…VTEY), 365 to 385 (TLVP…IVGG), and 393 to 413 (LYGI…IVAL). D421 serves as a coordination point for Mg(2+). 4 helical membrane passes run 452 to 472 (AVTK…LFAD), 490 to 510 (VVLS…AVMM), 558 to 578 (MAMP…FLGP), and 579 to 599 (EALA…ALMM). Residues D607, D633, and D637 each contribute to the Ca(2+) site. K640 provides a ligand contact to substrate. The chain crosses the membrane as a helical span at residues 650-670 (LIKVVNMVAILFSPLIIGGGF).

The protein belongs to the H(+)-translocating pyrophosphatase (TC 3.A.10) family. K(+)-insensitive subfamily. As to quaternary structure, homodimer. It depends on Mg(2+) as a cofactor.

It localises to the cell membrane. The catalysed reaction is diphosphate + H2O + H(+)(in) = 2 phosphate + 2 H(+)(out). Proton pump that utilizes the energy of pyrophosphate hydrolysis as the driving force for proton movement across the membrane. Generates a proton motive force. The polypeptide is K(+)-insensitive pyrophosphate-energized proton pump (Methanosarcina mazei (strain ATCC BAA-159 / DSM 3647 / Goe1 / Go1 / JCM 11833 / OCM 88) (Methanosarcina frisia)).